The chain runs to 549 residues: Myotubularin-related protein 9 (549 aa).

Met-1 carries the N-acetylmethionine modification. One can recognise a GRAM domain in the interval 4–99 (AELIKTPRVD…LNIASSIEAL (96 aa)). Residues 123-498 (GWHSFLPEQE…QSLPLWEGIF (376 aa)) enclose the Myotubularin phosphatase domain. Residues 508–542 (LDEAYEEMVNIIEYNKELQAKVNILRRQLAELETE) are a coiled coil. The residue at position 548 (Ser-548) is a Phosphoserine.

The protein belongs to the protein-tyrosine phosphatase family. Non-receptor class myotubularin subfamily. In terms of assembly, homodimer. Heterodimer (via C-terminus) with lipid phosphatase MTMR6 (via C-terminus). Heterodimer (via coiled coil domain) with lipid phosphatase MTMR7 (via C-terminus). Heterodimer with lipid phosphatase MTMR8. As to expression, expressed in many tissues.

The protein localises to the cytoplasm. It is found in the cell projection. It localises to the ruffle membrane. Its subcellular location is the perinuclear region. The protein resides in the endoplasmic reticulum. Functionally, acts as an adapter for myotubularin-related phosphatases. Increases lipid phosphatase MTMR6 catalytic activity, specifically towards phosphatidylinositol 3,5-bisphosphate and MTMR6 binding affinity for phosphorylated phosphatidylinositols. Positively regulates lipid phosphatase MTMR7 catalytic activity. Increases MTMR8 catalytic activity towards phosphatidylinositol 3-phosphate. The formation of the MTMR6-MTMR9 complex, stabilizes both MTMR6 and MTMR9 protein levels. Stabilizes MTMR8 protein levels. Plays a role in the late stages of macropinocytosis possibly by regulating MTMR6-mediated dephosphorylation of phosphatidylinositol 3-phosphate in membrane ruffles. Negatively regulates autophagy, in part via its association with MTMR8. Negatively regulates DNA damage-induced apoptosis, in part via its association with MTMR6. Does not bind mono-, di- and tri-phosphorylated phosphatidylinositols, phosphatidic acid and phosphatidylserine. This chain is Myotubularin-related protein 9 (MTMR9), found in Homo sapiens (Human).